Consider the following 352-residue polypeptide: Fe-S cluster assembly protein DRE2 (352 aa).

The span at 1–11 shows a compositional bias: polar residues; sequence MAPTAVYTQKD. Residues 1–24 form a disordered region; the sequence is MAPTAVYTQKDSPSSSQPSSKGPA. Residues 1–196 form an N-terminal SAM-like domain region; the sequence is MAPTAVYTQK…TVTSAPSVPL (196 aa). Residues 196–237 form a linker region; sequence LLLRKRGDPAKKKALWALTTDASASPSTKIDADALLTAEDKA. [2Fe-2S] cluster-binding residues include Cys-243, Cys-257, Cys-260, and Cys-262. Positions 243-262 are fe-S binding site A; the sequence is CAPVDRSAPRRKKACKNCSC. Cys-315, Cys-318, Cys-326, and Cys-329 together coordinate [4Fe-4S] cluster. 2 consecutive short sequence motifs (cx2C motif) follow at residues 315 to 318 and 326 to 329; these read CGSC and CAGC. The fe-S binding site B stretch occupies residues 315–329; that stretch reads CGSCFLGDAFRCAGC.

This sequence belongs to the anamorsin family. As to quaternary structure, monomer. Interacts with TAH18. Interacts with MIA40. [2Fe-2S] cluster serves as cofactor. The cofactor is [4Fe-4S] cluster.

The protein resides in the cytoplasm. It is found in the mitochondrion intermembrane space. Its function is as follows. Component of the cytosolic iron-sulfur (Fe-S) protein assembly (CIA) machinery required for the maturation of extramitochondrial Fe-S proteins. Part of an electron transfer chain functioning in an early step of cytosolic Fe-S biogenesis, facilitating the de novo assembly of a [4Fe-4S] cluster on the scaffold complex CFD1-NBP35. Electrons are transferred to DRE2 from NADPH via the FAD- and FMN-containing protein TAH18. TAH18-DRE2 are also required for the assembly of the diferric tyrosyl radical cofactor of ribonucleotide reductase (RNR), probably by providing electrons for reduction during radical cofactor maturation in the catalytic small subunit RNR2. This is Fe-S cluster assembly protein DRE2 from Coprinopsis cinerea (strain Okayama-7 / 130 / ATCC MYA-4618 / FGSC 9003) (Inky cap fungus).